We begin with the raw amino-acid sequence, 468 residues long: Tubulin gamma chain (468 aa).

142 to 148 (AGGTGSG) is a binding site for GTP.

This sequence belongs to the tubulin family.

Its subcellular location is the cytoplasm. It localises to the cytoskeleton. The protein resides in the microtubule organizing center. Tubulin is the major constituent of microtubules. The gamma chain is found at microtubule organizing centers (MTOC) such as the spindle poles, suggesting that it is involved in the minus-end nucleation of microtubule assembly. In Chlamydomonas reinhardtii (Chlamydomonas smithii), this protein is Tubulin gamma chain (TUBG).